Here is a 225-residue protein sequence, read N- to C-terminus: Membrane-spanning 4-domains subfamily A member 4D (225 aa).

Residues 1–42 (MQGLAQTTMAVVPGGAPPSENSVIKSQMWNKNKEKFLKGEPK) are Cytoplasmic-facing. Residues 43–63 (VLGAIQVMIAFINFSLGIIII) traverse the membrane as a helical segment. The Extracellular segment spans residues 64 to 73 (LNRVSERFMS). A helical transmembrane segment spans residues 74–94 (VLLLAPFWGSIMFIFSGSLSI). Over 95 to 113 (AAGVKPTKAMIISSLSVNT) the chain is Cytoplasmic. Residues 114–134 (ISSVLAVAASIIGVISVISGV) traverse the membrane as a helical segment. At 135–148 (FRQFRSQPAIASLD) the chain is on the extracellular side. The chain crosses the membrane as a helical span at residues 149–169 (VLMTILNMLEFCIAVSVSAFG). The Cytoplasmic portion of the chain corresponds to 170–225 (CKASCCNSSEVLVVLPSNSAVTVTAPPMILQPLPPSECQGKNVPENLYRNQPGEIV).

This sequence belongs to the MS4A family. As to expression, expressed in thymus, spleen, peripheral lymph node, liver, kidney, heart, colon, lung, and testes.

The protein localises to the membrane. Its function is as follows. May be involved in signal transduction as a component of a multimeric receptor complex. In Mus musculus (Mouse), this protein is Membrane-spanning 4-domains subfamily A member 4D (Ms4a4d).